A 47-amino-acid polypeptide reads, in one-letter code: Delta-actitoxin-Axm1e (47 aa).

Intrachain disulfides connect Cys-4-Cys-44, Cys-6-Cys-34, and Cys-27-Cys-45.

The protein belongs to the sea anemone sodium channel inhibitory toxin family. Type I subfamily.

Its subcellular location is the secreted. It localises to the nematocyst. Binds specifically to voltage-gated sodium channels (Nav), thereby delaying their inactivation. This toxin is active on a variety of voltage-gated sodium channels (Nav1.1/SCN1A, Nav1.2/SCN2A, Nav1.3/SCN3A, Nav1.4/SCN4A, Nav1.5/SCN5A and Nav1.6/SCN8A). The polypeptide is Delta-actitoxin-Axm1e (Anthopleura xanthogrammica (Giant green sea anemone)).